Here is a 79-residue protein sequence, read N- to C-terminus: ATP synthase subunit c (79 aa).

2 helical membrane-spanning segments follow: residues 11 to 31 and 53 to 73; these read MAAA…IGIL and FFIV…LGLY.

The protein belongs to the ATPase C chain family. In terms of assembly, F-type ATPases have 2 components, F(1) - the catalytic core - and F(0) - the membrane proton channel. F(1) has five subunits: alpha(3), beta(3), gamma(1), delta(1), epsilon(1). F(0) has three main subunits: a(1), b(2) and c(10-14). The alpha and beta chains form an alternating ring which encloses part of the gamma chain. F(1) is attached to F(0) by a central stalk formed by the gamma and epsilon chains, while a peripheral stalk is formed by the delta and b chains.

It is found in the cell inner membrane. In terms of biological role, f(1)F(0) ATP synthase produces ATP from ADP in the presence of a proton or sodium gradient. F-type ATPases consist of two structural domains, F(1) containing the extramembraneous catalytic core and F(0) containing the membrane proton channel, linked together by a central stalk and a peripheral stalk. During catalysis, ATP synthesis in the catalytic domain of F(1) is coupled via a rotary mechanism of the central stalk subunits to proton translocation. Key component of the F(0) channel; it plays a direct role in translocation across the membrane. A homomeric c-ring of between 10-14 subunits forms the central stalk rotor element with the F(1) delta and epsilon subunits. The chain is ATP synthase subunit c from Serratia proteamaculans (strain 568).